A 248-amino-acid polypeptide reads, in one-letter code: Triosephosphate isomerase B (248 aa).

Asn11 and Lys13 together coordinate substrate. The active-site Electrophile is the His95. Glu165 serves as the catalytic Proton acceptor.

Belongs to the triosephosphate isomerase family. As to quaternary structure, homodimer.

The protein resides in the cytoplasm. It catalyses the reaction dihydroxyacetone phosphate = methylglyoxal + phosphate. The enzyme catalyses D-glyceraldehyde 3-phosphate = dihydroxyacetone phosphate. It participates in carbohydrate degradation; glycolysis; D-glyceraldehyde 3-phosphate from glycerone phosphate: step 1/1. The protein operates within carbohydrate biosynthesis; gluconeogenesis. Its function is as follows. Triosephosphate isomerase is an extremely efficient metabolic enzyme that catalyzes the interconversion between dihydroxyacetone phosphate (DHAP) and D-glyceraldehyde-3-phosphate (G3P) in glycolysis and gluconeogenesis. Functionally, it is also responsible for the non-negligible production of methylglyoxal a reactive cytotoxic side-product that modifies and can alter proteins, DNA and lipids. This chain is Triosephosphate isomerase B (tpi1b), found in Danio rerio (Zebrafish).